The primary structure comprises 802 residues: Ribosomal protein S6 kinase alpha-5 (802 aa).

Gly residues predominate over residues 1 to 22 (MEEEGGSSGGAAGTSADGGDGG). Positions 1–23 (MEEEGGSSGGAAGTSADGGDGGE) are disordered. In terms of domain architecture, Protein kinase 1 spans 49-318 (FELLKVLGTG…ADEIKEHLFF (270 aa)). ATP contacts are provided by residues 55–63 (LGTGAYGKV) and Lys81. Residue Asp177 is the Proton acceptor of the active site. Ser212 is subject to Phosphoserine; by autocatalysis. The region spanning 319–387 (QKINWDDLAA…VAPSILFKRN (69 aa)) is the AGC-kinase C-terminal domain. Residue Ser360 is modified to Phosphoserine; by MAPK1, MAPK3 and MAPK14. Phosphoserine; by autocatalysis is present on residues Ser376 and Ser381. Positions 426–687 (DLKDKPLGEG…MSGLRYNEWL (262 aa)) constitute a Protein kinase 2 domain. Residues 432 to 440 (LGEGSFSIC) and Lys455 contribute to the ATP site. Asp544 serves as the catalytic Proton acceptor. Thr581 is modified (phosphothreonine; by MAPK1, MAPK3 and MAPK14). Phosphoserine is present on residues Ser647, Ser657, Ser691, and Ser695. A Phosphothreonine; by MAPK1, MAPK3 and MAPK14 modification is found at Thr700. Positions 741-802 (AKRRKMKKTS…TLFQFSDSVA (62 aa)) are disordered. Over residues 749–779 (TSTSTETRSSSSESSHSSSSHSHGKTTPTKT) the composition is skewed to low complexity. Phosphoserine; by autocatalysis occurs at positions 750, 752, and 758. Residues 780–802 (LQPSNPADSNNPETLFQFSDSVA) are compositionally biased toward polar residues. Ser798 is subject to Phosphoserine.

This sequence belongs to the protein kinase superfamily. AGC Ser/Thr protein kinase family. S6 kinase subfamily. As to quaternary structure, forms a complex with either MAPK1/ERK2 or MAPK3/ERK1 in quiescent cells which transiently dissociates following mitogenic stimulation. Also associates with MAPK14/p38-alpha. Activated RPS6KA5 associates with and phosphorylates the NF-kappa-B p65 subunit RELA. Interacts with CREBBP and EP300. The cofactor is Mg(2+). Ser-376 and Thr-581 phosphorylation is required for kinase activity. Ser-376 and Ser-212 are autophosphorylated by the C-terminal kinase domain, and their phosphorylation is essential for the catalytic activity of the N-terminal kinase domain. Phosphorylated at Ser-360, Thr-581 and Thr-700 by MAPK1/ERK2, MAPK3/ERK1 and MAPK14/p38-alpha. Autophosphorylated at Ser-750, Ser-752 and Ser-758 by the N-terminal kinase domain. In terms of processing, ubiquitinated. In terms of tissue distribution, widely expressed with high levels in heart, brain and placenta. Less abundant in lung, kidney and liver.

It is found in the nucleus. The protein localises to the cytoplasm. The catalysed reaction is L-seryl-[protein] + ATP = O-phospho-L-seryl-[protein] + ADP + H(+). It carries out the reaction L-threonyl-[protein] + ATP = O-phospho-L-threonyl-[protein] + ADP + H(+). Activated by phosphorylation at Ser-360, Thr-581 and Thr-700 by MAPK1/ERK2, MAPK3/ERK1 and MAPK14/p38-alpha, and by further autophosphorylation of Ser-212, Ser-376 and Ser-381 by the activated C-terminal kinase domain. The active N-terminal kinase domain finally phosphorylates downstream substrates, as well as Ser-750, Ser-752 and Ser-758 in its own C-terminal region. Its function is as follows. Serine/threonine-protein kinase that is required for the mitogen or stress-induced phosphorylation of the transcription factors CREB1 and ATF1 and for the regulation of the transcription factors RELA, STAT3 and ETV1/ER81, and that contributes to gene activation by histone phosphorylation and functions in the regulation of inflammatory genes. Phosphorylates CREB1 and ATF1 in response to mitogenic or stress stimuli such as UV-C irradiation, epidermal growth factor (EGF) and anisomycin. Plays an essential role in the control of RELA transcriptional activity in response to TNF and upon glucocorticoid, associates in the cytoplasm with the glucocorticoid receptor NR3C1 and contributes to RELA inhibition and repression of inflammatory gene expression. In skeletal myoblasts is required for phosphorylation of RELA at 'Ser-276' during oxidative stress. In erythropoietin-stimulated cells, is necessary for the 'Ser-727' phosphorylation of STAT3 and regulation of its transcriptional potential. Phosphorylates ETV1/ER81 at 'Ser-191' and 'Ser-216', and thereby regulates its ability to stimulate transcription, which may be important during development and breast tumor formation. Directly represses transcription via phosphorylation of 'Ser-1' of histone H2A. Phosphorylates 'Ser-10' of histone H3 in response to mitogenics, stress stimuli and EGF, which results in the transcriptional activation of several immediate early genes, including proto-oncogenes c-fos/FOS and c-jun/JUN. May also phosphorylate 'Ser-28' of histone H3. Mediates the mitogen- and stress-induced phosphorylation of high mobility group protein 1 (HMGN1/HMG14). In lipopolysaccharide-stimulated primary macrophages, acts downstream of the Toll-like receptor TLR4 to limit the production of pro-inflammatory cytokines. Functions probably by inducing transcription of the MAP kinase phosphatase DUSP1 and the anti-inflammatory cytokine interleukin 10 (IL10), via CREB1 and ATF1 transcription factors. Plays a role in neuronal cell death by mediating the downstream effects of excitotoxic injury. Phosphorylates TRIM7 at 'Ser-107' in response to growth factor signaling via the MEK/ERK pathway, thereby stimulating its ubiquitin ligase activity. The sequence is that of Ribosomal protein S6 kinase alpha-5 (RPS6KA5) from Homo sapiens (Human).